The primary structure comprises 426 residues: 3-phosphoshikimate 1-carboxyvinyltransferase (426 aa).

3-phosphoshikimate-binding residues include K23, S24, and R28. K23 contributes to the phosphoenolpyruvate binding site. The phosphoenolpyruvate site is built by G96 and R124. 6 residues coordinate 3-phosphoshikimate: T170, S171, Q172, S198, D314, and K341. Q172 is a phosphoenolpyruvate binding site. Catalysis depends on D314, which acts as the Proton acceptor. Phosphoenolpyruvate is bound by residues R345, R386, and K411.

Belongs to the EPSP synthase family. As to quaternary structure, monomer.

The protein localises to the cytoplasm. The catalysed reaction is 3-phosphoshikimate + phosphoenolpyruvate = 5-O-(1-carboxyvinyl)-3-phosphoshikimate + phosphate. The protein operates within metabolic intermediate biosynthesis; chorismate biosynthesis; chorismate from D-erythrose 4-phosphate and phosphoenolpyruvate: step 6/7. Its function is as follows. Catalyzes the transfer of the enolpyruvyl moiety of phosphoenolpyruvate (PEP) to the 5-hydroxyl of shikimate-3-phosphate (S3P) to produce enolpyruvyl shikimate-3-phosphate and inorganic phosphate. The protein is 3-phosphoshikimate 1-carboxyvinyltransferase of Trichormus variabilis (strain ATCC 29413 / PCC 7937) (Anabaena variabilis).